A 393-amino-acid chain; its full sequence is Staphopain B (393 aa).

The N-terminal stretch at 1–36 (MNSSYKSRVFNIISIIMVSMLILSLGAFANNNKAKA) is a signal peptide. Residues 37–219 (DSHSKQLEIN…KVEENEAIQE (183 aa)) constitute a propeptide that is removed on maturation. Residues Cys-243, His-340, and Asn-360 contribute to the active site.

This sequence belongs to the peptidase C47 family. As to quaternary structure, in the cytoplasm, prematurely activated/folded SspB forms a stable non-covalent complex with SspC. In terms of processing, proteolytically cleaved by staphylococcal serine protease (SspA).

It localises to the secreted. Its activity is regulated as follows. Prematurely activated/folded staphopain B is inhibited by staphostatin B (SspC), which is probably required to protect staphylococcal cytoplasmic proteins from degradation by SspB. Functionally, cysteine protease that plays an important role in the inhibition of host innate immune response. Degrades host elastin, fibrogen, fibronectin and kininogen. Blocks phagocytosis of opsonised S.aureus by neutrophils and monocytes by inducing their death in a proteolytic activity-dependent manner. Decreases surface expression of the 'don't eat me' signal CD31 on neutrophils. Cleaves host galectin-3/LGALS3, thereby inhibiting the neutrophil-activating ability of the lectin. This chain is Staphopain B (sspB), found in Staphylococcus aureus (strain MSSA476).